The chain runs to 229 residues: Golgi to ER traffic protein 1 (229 aa).

At 1–14 (MGILAALDLHPYTL) the chain is on the lumenal side. Residues 15–34 (VVSSFTVLLIQQLVGFIGKS) form a helical membrane-spanning segment. Over 35–122 (TIQEFAWLFY…KINSLVGVVL (88 aa)) the chain is Cytoplasmic. Residues 60-117 (HTKKQEELHKLNREKRSISAQDEYAKWTKLNRQAEKLTAEVKSLSDDIAKDKSKINSL) are a coiled coil. The chain crosses the membrane as a helical span at residues 123-143 (LFLTTLPLWVFRLWFRKSVLF). At 144-167 (YLPTGVFPYYVERVLAIPFFASGS) the chain is on the lumenal side. The helical transmembrane segment at 168–184 (VGLTVWMFAVNNVISSV) threads the bilayer. The Cytoplasmic segment spans residues 185-229 (LFLLTFPFKPSVPIPIRQTKVEEVVPESAESKESSPEVIDIADAN). Residues 210–219 (PESAESKESS) show a composition bias toward basic and acidic residues. The disordered stretch occupies residues 210-229 (PESAESKESSPEVIDIADAN).

This sequence belongs to the WRB/GET1 family. In terms of assembly, component of the Golgi to ER traffic (GET) complex, which is composed of GET1, GET2 and GET3. Within the complex, GET1 and GET2 form a heterotetramer which is stabilized by phosphatidylinositol binding and which binds to the GET3 homodimer.

Its subcellular location is the endoplasmic reticulum membrane. The protein localises to the golgi apparatus membrane. Functionally, required for the post-translational delivery of tail-anchored (TA) proteins to the endoplasmic reticulum. Together with GET2, acts as a membrane receptor for soluble GET3, which recognizes and selectively binds the transmembrane domain of TA proteins in the cytosol. The GET complex cooperates with the HDEL receptor ERD2 to mediate the ATP-dependent retrieval of resident ER proteins that contain a C-terminal H-D-E-L retention signal from the Golgi to the ER. In Scheffersomyces stipitis (strain ATCC 58785 / CBS 6054 / NBRC 10063 / NRRL Y-11545) (Yeast), this protein is Golgi to ER traffic protein 1.